The primary structure comprises 563 residues: Dihydroxy-acid dehydratase (563 aa).

Cysteine 50 lines the [2Fe-2S] cluster pocket. Residue aspartate 82 participates in Mg(2+) binding. Cysteine 123 is a [2Fe-2S] cluster binding site. 2 residues coordinate Mg(2+): aspartate 124 and lysine 125. At lysine 125 the chain carries N6-carboxylysine. Residue cysteine 195 coordinates [2Fe-2S] cluster. Glutamate 447 serves as a coordination point for Mg(2+). Serine 473 acts as the Proton acceptor in catalysis.

Belongs to the IlvD/Edd family. As to quaternary structure, homodimer. [2Fe-2S] cluster is required as a cofactor. The cofactor is Mg(2+).

It carries out the reaction (2R)-2,3-dihydroxy-3-methylbutanoate = 3-methyl-2-oxobutanoate + H2O. The catalysed reaction is (2R,3R)-2,3-dihydroxy-3-methylpentanoate = (S)-3-methyl-2-oxopentanoate + H2O. Its pathway is amino-acid biosynthesis; L-isoleucine biosynthesis; L-isoleucine from 2-oxobutanoate: step 3/4. It functions in the pathway amino-acid biosynthesis; L-valine biosynthesis; L-valine from pyruvate: step 3/4. Its function is as follows. Functions in the biosynthesis of branched-chain amino acids. Catalyzes the dehydration of (2R,3R)-2,3-dihydroxy-3-methylpentanoate (2,3-dihydroxy-3-methylvalerate) into 2-oxo-3-methylpentanoate (2-oxo-3-methylvalerate) and of (2R)-2,3-dihydroxy-3-methylbutanoate (2,3-dihydroxyisovalerate) into 2-oxo-3-methylbutanoate (2-oxoisovalerate), the penultimate precursor to L-isoleucine and L-valine, respectively. The chain is Dihydroxy-acid dehydratase from Nostoc sp. (strain PCC 7120 / SAG 25.82 / UTEX 2576).